The sequence spans 484 residues: tRNA sulfurtransferase (484 aa).

Residues 63-167 (KEMGERLTCM…DKRLFVIHSQ (105 aa)) enclose the THUMP domain. Residues 185–186 (LM), Lys-267, Gly-289, and Gln-298 contribute to the ATP site. Cys-346 and Cys-457 are disulfide-bonded. The Rhodanese domain occupies 405–483 (ALAGQIVIDI…GHANVRVYRP (79 aa)). Cys-457 acts as the Cysteine persulfide intermediate in catalysis.

Belongs to the ThiI family.

It is found in the cytoplasm. It catalyses the reaction [ThiI sulfur-carrier protein]-S-sulfanyl-L-cysteine + a uridine in tRNA + 2 reduced [2Fe-2S]-[ferredoxin] + ATP + H(+) = [ThiI sulfur-carrier protein]-L-cysteine + a 4-thiouridine in tRNA + 2 oxidized [2Fe-2S]-[ferredoxin] + AMP + diphosphate. The enzyme catalyses [ThiS sulfur-carrier protein]-C-terminal Gly-Gly-AMP + S-sulfanyl-L-cysteinyl-[cysteine desulfurase] + AH2 = [ThiS sulfur-carrier protein]-C-terminal-Gly-aminoethanethioate + L-cysteinyl-[cysteine desulfurase] + A + AMP + 2 H(+). It participates in cofactor biosynthesis; thiamine diphosphate biosynthesis. Catalyzes the ATP-dependent transfer of a sulfur to tRNA to produce 4-thiouridine in position 8 of tRNAs, which functions as a near-UV photosensor. Also catalyzes the transfer of sulfur to the sulfur carrier protein ThiS, forming ThiS-thiocarboxylate. This is a step in the synthesis of thiazole, in the thiamine biosynthesis pathway. The sulfur is donated as persulfide by IscS. The sequence is that of tRNA sulfurtransferase from Pseudomonas fluorescens (strain Pf0-1).